We begin with the raw amino-acid sequence, 95 residues long: Small ribosomal subunit protein bS6 (95 aa).

Belongs to the bacterial ribosomal protein bS6 family.

Its function is as follows. Binds together with bS18 to 16S ribosomal RNA. In Symbiobacterium thermophilum (strain DSM 24528 / JCM 14929 / IAM 14863 / T), this protein is Small ribosomal subunit protein bS6.